Consider the following 406-residue polypeptide: Lysosome-associated membrane glycoprotein 1 (406 aa).

Residues 1–24 (MAAPGARRPLLLLLLAGLAHGASA) form the signal peptide. Positions 25–188 (LFEVKNNGTT…SKEETHCTQD (164 aa)) are first lumenal domain. Residues 25-370 (LFEVKNNGTT…VEECVQDGNN (346 aa)) lie on the Lumenal side of the membrane. N-linked (GlcNAc...) asparagine glycosylation is found at Asn31, Asn52, Asn58, Asn70, Asn78, Asn97, Asn101, Asn115, Asn159, and Asn177. Cys35 and Cys74 are joined by a disulfide. Cysteines 149 and 185 form a disulfide. The segment at 180–207 (KEETHCTQDGPSPTTGPPSPSPPLVPTN) is disordered. The hinge stretch occupies residues 189-218 (GPSPTTGPPSPSPPLVPTNPTVSKYNVTGN). Positions 193 to 205 (TTGPPSPSPPLVP) are enriched in pro residues. 4 N-linked (GlcNAc...) asparagine glycosylation sites follow: Asn214, Asn219, Asn232, and Asn240. A second lumenal domain region spans residues 219 to 370 (NGTCLLASMA…VEECVQDGNN (152 aa)). Cys222 and Cys259 are joined by a disulfide. Asn252 carries N-linked (GlcNAc...) (high mannose) asparagine glycosylation. N-linked (GlcNAc...) asparagine glycosylation is found at Asn282, Asn296, and Asn311. An intrachain disulfide couples Cys327 to Cys364. A helical membrane pass occupies residues 371–394 (MLIPIAVGGALAGLVLIVLIAYLI). The Cytoplasmic segment spans residues 395-406 (GRKRSHAGYQTI).

It belongs to the LAMP family. Interacts with ABCB9; this interaction strongly stabilizes ABCB9 and protects ABCB9 against lysosomal degradation. Interacts with FURIN. Interacts with TMEM175; inhibiting the proton channel activity of TMEM175. In terms of processing, O- and N-glycosylated; some of the N-glycans attached to LAMP-1 are polylactosaminoglycans.

The protein localises to the lysosome membrane. It localises to the endosome membrane. It is found in the late endosome membrane. The protein resides in the cell membrane. Its subcellular location is the cytolytic granule membrane. Lysosomal membrane glycoprotein which plays an important role in lysosome biogenesis, lysosomal pH regulation, autophagy and cholesterol homeostasis. Acts as an important regulator of lysosomal lumen pH regulation by acting as a direct inhibitor of the proton channel TMEM175, facilitating lysosomal acidification for optimal hydrolase activity. Also plays an important role in NK-cells cytotoxicity. Mechanistically, participates in cytotoxic granule movement to the cell surface and perforin trafficking to the lytic granule. In addition, protects NK-cells from degranulation-associated damage induced by their own cytotoxic granule content. Presents carbohydrate ligands to selectins. Also implicated in tumor cell metastasis. This Mus musculus (Mouse) protein is Lysosome-associated membrane glycoprotein 1 (Lamp1).